A 356-amino-acid polypeptide reads, in one-letter code: Phosphoribosyl pyrophosphate synthase-associated protein 1 (356 aa).

M1 is modified (N-acetylmethionine). Residues S177 and S215 each carry the phosphoserine modification.

The protein belongs to the ribose-phosphate pyrophosphokinase family. In terms of assembly, binds to PRPS1 and PRPS2.

Seems to play a negative regulatory role in 5-phosphoribose 1-diphosphate synthesis. The protein is Phosphoribosyl pyrophosphate synthase-associated protein 1 (Prpsap1) of Mus musculus (Mouse).